We begin with the raw amino-acid sequence, 319 residues long: Phenoxybenzoate dioxygenase subunit beta (319 aa).

In terms of domain architecture, FAD-binding FR-type spans 7–109 (MAPVSLRIHA…DGPSNHFALD (103 aa)). NAD(+) is bound at residue 113–223 (PHAVFIAGGI…PARVHLEYFA (111 aa)). In terms of domain architecture, 2Fe-2S ferredoxin-type spans 234–319 (FVVHLARSGR…SKTAELTLDL (86 aa)). 4 residues coordinate [2Fe-2S] cluster: Cys268, Cys273, Cys276, and Cys306.

This sequence belongs to the PDR/VanB family. As to quaternary structure, this dioxygenase system consists of two proteins: the alpha subunit (PobA) and a subunit (PobB) that acts as a ferredoxin and a ferredoxin reductase. FMN serves as cofactor.

It participates in aromatic compound metabolism; carboxydiphenyl ether degradation. Its function is as follows. Degrades exclusively diarylether compounds having carboxyl groups in the 3- or 4-position. Yields a hemiacetal that spontaneously hydrolyzes to phenol and protocatechuate. This chain is Phenoxybenzoate dioxygenase subunit beta (pobB), found in Ectopseudomonas oleovorans (Pseudomonas oleovorans).